An 85-amino-acid chain; its full sequence is U4-theraphotoxin-Hhn1a (85 aa).

The signal sequence occupies residues 1-22 (MKVTLIAILTCAAVLVLHTTAA). Residues 23–48 (EELEAESQPMEVGMPDTELAAVDEER) constitute a propeptide that is removed on maturation. 3 disulfides stabilise this stretch: C52–C66, C56–C77, and C71–C82.

It belongs to the neurotoxin 12 (Hwtx-2) family. 02 (Hwtx-2) subfamily. Monomer. As to expression, expressed by the venom gland.

The protein localises to the secreted. In terms of biological role, neurotoxin active on both insects and mammals. The chain is U4-theraphotoxin-Hhn1a from Cyriopagopus hainanus (Chinese bird spider).